Here is a 421-residue protein sequence, read N- to C-terminus: uncharacterized protein (421 aa).

The 59-residue stretch at Asp14–Gln72 folds into the TRAM domain. The S-adenosyl-L-methionine site is built by Gln250, Tyr286, Glu308, and Asp349. The active-site Nucleophile is the Cys376.

This sequence belongs to the class I-like SAM-binding methyltransferase superfamily. RNA M5U methyltransferase family.

This is an uncharacterized protein from Corynebacterium efficiens (strain DSM 44549 / YS-314 / AJ 12310 / JCM 11189 / NBRC 100395).